The primary structure comprises 419 residues: Enolase (419 aa).

Gln161 contacts (2R)-2-phosphoglycerate. Glu205 serves as the catalytic Proton donor. Mg(2+) is bound by residues Asp240, Glu283, and Asp309. Residues Lys334, Arg363, Ser364, and Lys385 each coordinate (2R)-2-phosphoglycerate. Lys334 serves as the catalytic Proton acceptor.

Belongs to the enolase family. Mg(2+) serves as cofactor.

The protein resides in the cytoplasm. It localises to the secreted. It is found in the cell surface. It catalyses the reaction (2R)-2-phosphoglycerate = phosphoenolpyruvate + H2O. It functions in the pathway carbohydrate degradation; glycolysis; pyruvate from D-glyceraldehyde 3-phosphate: step 4/5. Catalyzes the reversible conversion of 2-phosphoglycerate (2-PG) into phosphoenolpyruvate (PEP). It is essential for the degradation of carbohydrates via glycolysis. The protein is Enolase of Saccharolobus islandicus (strain Y.G.57.14 / Yellowstone #1) (Sulfolobus islandicus).